The sequence spans 241 residues: 2,3,4,5-tetrahydropyridine-2,6-dicarboxylate N-acetyltransferase (241 aa).

This sequence belongs to the transferase hexapeptide repeat family. DapH subfamily.

The enzyme catalyses (S)-2,3,4,5-tetrahydrodipicolinate + acetyl-CoA + H2O = L-2-acetamido-6-oxoheptanedioate + CoA. The protein operates within amino-acid biosynthesis; L-lysine biosynthesis via DAP pathway; LL-2,6-diaminopimelate from (S)-tetrahydrodipicolinate (acetylase route): step 1/3. Its function is as follows. Catalyzes the transfer of an acetyl group from acetyl-CoA to tetrahydrodipicolinate. This Caldanaerobacter subterraneus subsp. tengcongensis (strain DSM 15242 / JCM 11007 / NBRC 100824 / MB4) (Thermoanaerobacter tengcongensis) protein is 2,3,4,5-tetrahydropyridine-2,6-dicarboxylate N-acetyltransferase.